The sequence spans 541 residues: Membrane protein insertase YidC (541 aa).

Transmembrane regions (helical) follow at residues 6-26, 349-369, 420-440, 457-477, and 500-520; these read NILL…WQAD, FVGN…GLLF, GGCL…WVLL, LSVQ…MFVM, and VIFT…WLVG.

The protein belongs to the OXA1/ALB3/YidC family. Type 1 subfamily. In terms of assembly, interacts with the Sec translocase complex via SecD. Specifically interacts with transmembrane segments of nascent integral membrane proteins during membrane integration.

The protein localises to the cell inner membrane. Functionally, required for the insertion and/or proper folding and/or complex formation of integral membrane proteins into the membrane. Involved in integration of membrane proteins that insert both dependently and independently of the Sec translocase complex, as well as at least some lipoproteins. Aids folding of multispanning membrane proteins. The chain is Membrane protein insertase YidC from Shewanella sp. (strain MR-7).